The following is a 106-amino-acid chain: Nucleoid-associated protein BRADO0764 (106 aa).

It belongs to the YbaB/EbfC family. Homodimer.

It is found in the cytoplasm. Its subcellular location is the nucleoid. In terms of biological role, binds to DNA and alters its conformation. May be involved in regulation of gene expression, nucleoid organization and DNA protection. This is Nucleoid-associated protein BRADO0764 from Bradyrhizobium sp. (strain ORS 278).